The following is a 316-amino-acid chain: tRNA dimethylallyltransferase (316 aa).

17–24 (GPTASGKT) is an ATP binding site. Residue 19-24 (TASGKT) coordinates substrate. Interaction with substrate tRNA regions lie at residues 42-45 (DSAL), 166-170 (QRLSR), 247-252 (RCVGYR), and 280-287 (KRQITWLR).

The protein belongs to the IPP transferase family. As to quaternary structure, monomer. Requires Mg(2+) as cofactor.

The catalysed reaction is adenosine(37) in tRNA + dimethylallyl diphosphate = N(6)-dimethylallyladenosine(37) in tRNA + diphosphate. Its function is as follows. Catalyzes the transfer of a dimethylallyl group onto the adenine at position 37 in tRNAs that read codons beginning with uridine, leading to the formation of N6-(dimethylallyl)adenosine (i(6)A). The protein is tRNA dimethylallyltransferase of Shigella flexneri serotype 5b (strain 8401).